We begin with the raw amino-acid sequence, 158 residues long: MKKDEYIKLHQSYLNEYIKFADAKALAIISINGFILNFNFSKRNIKFHNTEDIFNFTAFILLIITIILAAFAVYPRTNNRSEKGIIFWDNINSMGEKEFIEKVKFEKEEELLEKTIQQNYFLAKTASMKYSIIRKVFIISALGYSCLLFSSIFQIICS.

Helical transmembrane passes span 20–40 (FADAKALAIISINGFILNFNF), 53–73 (IFNFTAFILLIITIILAAFAV), and 136–156 (VFIISALGYSCLLFSSIFQII).

The protein localises to the cell membrane. Its function is as follows. Pycsar (pyrimidine cyclase system for antiphage resistance) provides immunity against bacteriophage. The pyrimidine cyclase (PycC) synthesizes cyclic nucleotides in response to infection; these serve as specific second messenger signals. The signals activate the adjacent effector, leading to bacterial cell death and abortive phage infection. A clade E Pycsar system. In terms of biological role, the effector gene of a two-gene Pycsar system. Expression of this and adjacent SaPycC cytidylate cyclase (AC P0DV38) probably confers resistance to bacteriophage. The genes are probably only expressed in response to bacteriophage infection. Probably only responds to cCMP (produced by its cognate NTP cyclase), acts by impairing membrane integrity. The protein is Pycsar effector protein SaPycTM of Staphylococcus aureus.